A 430-amino-acid chain; its full sequence is UDP-N-acetylglucosamine 1-carboxyvinyltransferase (430 aa).

A phosphoenolpyruvate-binding site is contributed by 22 to 23; sequence KN. Residue arginine 102 participates in UDP-N-acetyl-alpha-D-glucosamine binding. Catalysis depends on cysteine 126, which acts as the Proton donor. Residue cysteine 126 is modified to 2-(S-cysteinyl)pyruvic acid O-phosphothioketal. UDP-N-acetyl-alpha-D-glucosamine-binding positions include 131–135, 172–175, aspartate 317, and isoleucine 339; these read RPVDL and KVSV.

This sequence belongs to the EPSP synthase family. MurA subfamily.

The protein localises to the cytoplasm. It catalyses the reaction phosphoenolpyruvate + UDP-N-acetyl-alpha-D-glucosamine = UDP-N-acetyl-3-O-(1-carboxyvinyl)-alpha-D-glucosamine + phosphate. It functions in the pathway cell wall biogenesis; peptidoglycan biosynthesis. In terms of biological role, cell wall formation. Adds enolpyruvyl to UDP-N-acetylglucosamine. The protein is UDP-N-acetylglucosamine 1-carboxyvinyltransferase of Agrobacterium fabrum (strain C58 / ATCC 33970) (Agrobacterium tumefaciens (strain C58)).